The sequence spans 119 residues: Autophagy-related protein 8c (119 aa).

Glycine 117 carries the Phosphatidylethanolamine amidated glycine lipid modification. A propeptide spans 118 to 119 (removed in mature form); it reads LV.

This sequence belongs to the ATG8 family. In terms of assembly, interacts with ATG4. Interacts with NBR1. The C-terminal 2 residues are removed by ATG4 to expose Gly-117 at the C-terminus. This Gly-117 forms then a thioester bond with the 'Cys-558' of ATG7 (E1-like activating enzyme) before being transferred to the 'Cys-258' of ATG3 (the specific E2 conjugating enzyme), in order to be finally amidated with phosphatidylethanolamine. This lipid modification anchors ATG8 to autophagosomes. In terms of tissue distribution, constitutively expressed.

Its subcellular location is the cytoplasmic vesicle. It is found in the autophagosome membrane. It localises to the vacuole membrane. The protein localises to the cytoplasm. The protein resides in the cytoskeleton. Functionally, ubiquitin-like modifier involved in autophagosomes formation. May mediate the delivery of the autophagosomes to the vacuole via the microtubule cytoskeleton. This is Autophagy-related protein 8c (ATG8C) from Arabidopsis thaliana (Mouse-ear cress).